A 104-amino-acid polypeptide reads, in one-letter code: MAEASIQIEVVYATVQRQVLMTVDVPAGSSVRQALALCGMDREFPELDLSHCPVGIFGKVVADPAARVLEAGERIEIYRPLLADPMEIRRLRAAKAREKRTLPG.

This sequence belongs to the UPF0125 (RnfH) family.

The polypeptide is UPF0125 protein PSPTO_4512 (Pseudomonas syringae pv. tomato (strain ATCC BAA-871 / DC3000)).